The primary structure comprises 423 residues: FVKNSGICETTPGVNQYSGYLSVGSNMNMWFWFFEARNNPQQAPLAAWFNGGPGCSSMIGLFQENGPCHFVNGDSTPSLNENSWNNYANMIYIDQPIGVGFSYGTDDVTSTVTAAPYVWNLLQAFYAQRPEYESRDFAIFTESYGGHYGPEFASYIEQQNAAIKAGSVTGQNVNIVALGVNNGWIDSTIQEKAYIDFSYNNSYQQIIDSSTRDSLLDAYNNQCLPALQQCSQSGSTSDCTNADSVCYQNIEGPISSSGDFDVYDIREPSNDPYPPKTYSTYLSDPTVVKAIGARTNYQECPNGPYNKFASTGDNPRSFLSTLSSVVQSGINVLVWAGDADWICNWLGNYEVANAVDFPGNAQFSALDLAPYTVNGVEKGQFKTVDNFSFLKVYGAGHEVPYYQPDTALQAFKQIIQKKPISST.

4 disulfides stabilise this stretch: Cys-8-Cys-68, Cys-55-Cys-300, Cys-223-Cys-246, and Cys-230-Cys-239. Ser-143 is an active-site residue. N-linked (GlcNAc...) asparagine glycosylation is present at Asn-200. Asp-340 is an active-site residue. Cys-343 contacts substrate. His-397 is a catalytic residue. Position 398 (Glu-398) interacts with substrate.

The protein belongs to the peptidase S10 family.

It catalyses the reaction Preferential release of a C-terminal arginine or lysine residue.. The chain is Carboxypeptidase S1 from Penicillium janthinellum (Penicillium vitale).